The following is a 496-amino-acid chain: UDP-N-acetylmuramoyl-L-alanyl-D-glutamate--2,6-diaminopimelate ligase (496 aa).

Residue serine 32 participates in UDP-N-acetyl-alpha-D-muramoyl-L-alanyl-D-glutamate binding. Residue 116 to 122 coordinates ATP; that stretch reads GTNGKTT. UDP-N-acetyl-alpha-D-muramoyl-L-alanyl-D-glutamate contacts are provided by residues 158–159, serine 185, glutamine 191, and arginine 193; that span reads TT. Lysine 225 is subject to N6-carboxylysine. Meso-2,6-diaminopimelate contacts are provided by residues arginine 389, 413-416, glycine 464, and glutamate 468; that span reads DNPR. Positions 413 to 416 match the Meso-diaminopimelate recognition motif motif; sequence DNPR.

Belongs to the MurCDEF family. MurE subfamily. It depends on Mg(2+) as a cofactor. In terms of processing, carboxylation is probably crucial for Mg(2+) binding and, consequently, for the gamma-phosphate positioning of ATP.

It is found in the cytoplasm. It catalyses the reaction UDP-N-acetyl-alpha-D-muramoyl-L-alanyl-D-glutamate + meso-2,6-diaminopimelate + ATP = UDP-N-acetyl-alpha-D-muramoyl-L-alanyl-gamma-D-glutamyl-meso-2,6-diaminopimelate + ADP + phosphate + H(+). It participates in cell wall biogenesis; peptidoglycan biosynthesis. In terms of biological role, catalyzes the addition of meso-diaminopimelic acid to the nucleotide precursor UDP-N-acetylmuramoyl-L-alanyl-D-glutamate (UMAG) in the biosynthesis of bacterial cell-wall peptidoglycan. The protein is UDP-N-acetylmuramoyl-L-alanyl-D-glutamate--2,6-diaminopimelate ligase of Trichormus variabilis (strain ATCC 29413 / PCC 7937) (Anabaena variabilis).